The following is a 317-amino-acid chain: UV DNA damage endonuclease (317 aa).

The protein belongs to the uve1/UvsE family.

Functionally, component in a DNA repair pathway. Removal of UV LIGHT damaged nucleotides. Recognizes pyrimidine dimers and cleave a phosphodiester bond immediately 5' to the lesion. In Bacillus cereus (strain G9842), this protein is UV DNA damage endonuclease.